The chain runs to 479 residues: F-box/LRR-repeat protein 16 (479 aa).

A disordered region spans residues 1–62 (MSSPGIDGDP…PTLPPPSLAA (62 aa)). Pro residues predominate over residues 47-60 (CQPPPPPTLPPPSL). Arg-92 carries the omega-N-methylarginine modification. Residues 94 to 139 (PLATDEKILNGLFWYFSACEKCVLAQVCKAWRRVLYQPKFWAGLTP) enclose the F-box domain. LRR repeat units follow at residues 244–266 (ITSL…ISQL), 267–290 (LPNL…YFTA), 319–343 (LPNL…LVAE), 345–369 (LRKL…YVAC), 371–395 (LHRL…YLST), 396–420 (MSSL…HLLA), and 446–470 (LQEL…YFSQ).

In terms of assembly, interacts with SKP1 and CUL1.

Substrate-recognition component of the SCF (SKP1-CUL1-F-box protein)-type E3 ubiquitin ligase complex. The protein is F-box/LRR-repeat protein 16 (FBXL16) of Homo sapiens (Human).